Consider the following 279-residue polypeptide: uncharacterized protein (279 aa).

Residues 1–87 enclose the Reverse transcriptase domain; the sequence is MRVNGRNLTN…DEYIYLGRQI (87 aa).

This is an uncharacterized protein from Caenorhabditis elegans.